The following is a 408-amino-acid chain: Phosphopentomutase (408 aa).

Mn(2+) contacts are provided by Asp10, Asp303, His308, Asp344, His345, and His356.

It belongs to the phosphopentomutase family. It depends on Mn(2+) as a cofactor.

It is found in the cytoplasm. It catalyses the reaction 2-deoxy-alpha-D-ribose 1-phosphate = 2-deoxy-D-ribose 5-phosphate. The catalysed reaction is alpha-D-ribose 1-phosphate = D-ribose 5-phosphate. It participates in carbohydrate degradation; 2-deoxy-D-ribose 1-phosphate degradation; D-glyceraldehyde 3-phosphate and acetaldehyde from 2-deoxy-alpha-D-ribose 1-phosphate: step 1/2. Its function is as follows. Isomerase that catalyzes the conversion of deoxy-ribose 1-phosphate (dRib-1-P) and ribose 1-phosphate (Rib-1-P) to deoxy-ribose 5-phosphate (dRib-5-P) and ribose 5-phosphate (Rib-5-P), respectively. The polypeptide is Phosphopentomutase (Tolumonas auensis (strain DSM 9187 / NBRC 110442 / TA 4)).